The sequence spans 473 residues: Cholesterol 22-monohydroxylase CYP90B52 (473 aa).

The chain crosses the membrane as a helical span at residues 2 to 22; it reads EGLLLLLPTAIIALYLYISLI. Position 422 (Cys-422) interacts with heme.

It belongs to the cytochrome P450 family. In terms of tissue distribution, mainly expressed in leaves and roots and, at low levels, in fruits and stems.

The protein resides in the membrane. The enzyme catalyses cholesterol + reduced [NADPH--hemoprotein reductase] + O2 = (22S)-22-hydroxycholesterol + oxidized [NADPH--hemoprotein reductase] + H2O + H(+). It participates in steroid metabolism; cholesterol metabolism. Canonical brassinosteroid (BR)-biosynthetic enzyme capable of converting cholesterol to 22S-hydroxycholesterol via sterol-C22 hydroxylation. In Paris polyphylla (Daiswa polyphylla), this protein is Cholesterol 22-monohydroxylase CYP90B52.